The primary structure comprises 162 residues: SsrA-binding protein (162 aa).

Belongs to the SmpB family.

The protein resides in the cytoplasm. In terms of biological role, required for rescue of stalled ribosomes mediated by trans-translation. Binds to transfer-messenger RNA (tmRNA), required for stable association of tmRNA with ribosomes. tmRNA and SmpB together mimic tRNA shape, replacing the anticodon stem-loop with SmpB. tmRNA is encoded by the ssrA gene; the 2 termini fold to resemble tRNA(Ala) and it encodes a 'tag peptide', a short internal open reading frame. During trans-translation Ala-aminoacylated tmRNA acts like a tRNA, entering the A-site of stalled ribosomes, displacing the stalled mRNA. The ribosome then switches to translate the ORF on the tmRNA; the nascent peptide is terminated with the 'tag peptide' encoded by the tmRNA and targeted for degradation. The ribosome is freed to recommence translation, which seems to be the essential function of trans-translation. This is SsrA-binding protein from Colwellia psychrerythraea (strain 34H / ATCC BAA-681) (Vibrio psychroerythus).